A 306-amino-acid chain; its full sequence is 2-phospho-L-lactate transferase (306 aa).

Asp-48 lines the 7,8-didemethyl-8-hydroxy-5-deazariboflavin pocket.

Belongs to the CofD family. In terms of assembly, homodimer. The cofactor is Mg(2+).

The catalysed reaction is (2S)-lactyl-2-diphospho-5'-guanosine + 7,8-didemethyl-8-hydroxy-5-deazariboflavin = oxidized coenzyme F420-0 + GMP + H(+). The protein operates within cofactor biosynthesis; coenzyme F420 biosynthesis. Catalyzes the transfer of the 2-phospholactate moiety from (2S)-lactyl-2-diphospho-5'-guanosine to 7,8-didemethyl-8-hydroxy-5-deazariboflavin (FO) with the formation of oxidized coenzyme F420-0 and GMP. This is 2-phospho-L-lactate transferase from Methanococcoides burtonii (strain DSM 6242 / NBRC 107633 / OCM 468 / ACE-M).